Reading from the N-terminus, the 21-residue chain is Peptide PGLa-B2 (21 aa).

L21 carries the post-translational modification Leucine amide.

In terms of tissue distribution, expressed by the skin glands.

Its subcellular location is the secreted. Has antimicrobial activity against Gram-negative bacterium E.coli ATCC 25922 (MIC=25 uM), Gram-positive bacterium S.auerus ATCC 25923 (MIC=50 uM) and against fungus C.albicans ATCC 90028 (MIC=25 uM). Has some hemolytic activity against human erythrocytes at high concentration. The polypeptide is Peptide PGLa-B2 (Xenopus borealis (Kenyan clawed frog)).